A 419-amino-acid chain; its full sequence is UDP-N-acetylglucosamine 1-carboxyvinyltransferase (419 aa).

Residue 22-23 (KN) coordinates phosphoenolpyruvate. R95 contributes to the UDP-N-acetyl-alpha-D-glucosamine binding site. Catalysis depends on C119, which acts as the Proton donor. A 2-(S-cysteinyl)pyruvic acid O-phosphothioketal modification is found at C119. Residues 164–167 (KVSV), D308, and I330 each bind UDP-N-acetyl-alpha-D-glucosamine.

It belongs to the EPSP synthase family. MurA subfamily.

It is found in the cytoplasm. The enzyme catalyses phosphoenolpyruvate + UDP-N-acetyl-alpha-D-glucosamine = UDP-N-acetyl-3-O-(1-carboxyvinyl)-alpha-D-glucosamine + phosphate. Its pathway is cell wall biogenesis; peptidoglycan biosynthesis. Cell wall formation. Adds enolpyruvyl to UDP-N-acetylglucosamine. In Rickettsia prowazekii (strain Madrid E), this protein is UDP-N-acetylglucosamine 1-carboxyvinyltransferase.